We begin with the raw amino-acid sequence, 370 residues long: 4-hydroxy-3-methylbut-2-en-1-yl diphosphate synthase (flavodoxin) (370 aa).

Positions 270, 273, 305, and 312 each coordinate [4Fe-4S] cluster.

It belongs to the IspG family. [4Fe-4S] cluster serves as cofactor.

It catalyses the reaction (2E)-4-hydroxy-3-methylbut-2-enyl diphosphate + oxidized [flavodoxin] + H2O + 2 H(+) = 2-C-methyl-D-erythritol 2,4-cyclic diphosphate + reduced [flavodoxin]. It functions in the pathway isoprenoid biosynthesis; isopentenyl diphosphate biosynthesis via DXP pathway; isopentenyl diphosphate from 1-deoxy-D-xylulose 5-phosphate: step 5/6. Its function is as follows. Converts 2C-methyl-D-erythritol 2,4-cyclodiphosphate (ME-2,4cPP) into 1-hydroxy-2-methyl-2-(E)-butenyl 4-diphosphate. The sequence is that of 4-hydroxy-3-methylbut-2-en-1-yl diphosphate synthase (flavodoxin) from Saccharophagus degradans (strain 2-40 / ATCC 43961 / DSM 17024).